The sequence spans 846 residues: MAP7 domain-containing protein 1 (846 aa).

2 disordered regions span residues 1–153 (MESG…ERAK) and 186–210 (EQRLKAEQRRAALEERQRQKLEKNK). The span at 24–41 (EPRPSPEGDPSPPPPPTP) shows a compositional bias: pro residues. A phosphothreonine mark is found at T49 and T53. A Phosphoserine modification is found at S95. T99 carries the post-translational modification Phosphothreonine. Residues 113–123 (RSSQPSPTTVP) show a composition bias toward low complexity. 2 positions are modified to phosphoserine: S115 and S118. Residue T120 is modified to Phosphothreonine. Residues S125 and S127 each carry the phosphoserine modification. A coiled-coil region spans residues 130 to 224 (AKQDVKKAGE…AAIQRSVKKT (95 aa)). Positions 132-153 (QDVKKAGERHKLAKERREERAK) are enriched in basic and acidic residues. S256, S275, S315, S368, and S401 each carry phosphoserine. Residues 318 to 816 (TLPRNGRDQG…KGTAGDKSLG (499 aa)) form a disordered region. Positions 407 to 437 (RRLEATPVQKKEKKDKERENEKEKSALARER) are enriched in basic and acidic residues. The stretch at 414–443 (VQKKEKKDKERENEKEKSALARERNLKKRQ) forms a coiled coil. A phosphoserine mark is found at S444, S448, S454, and S460. The segment covering 460 to 471 (SPKSKARPSSPS) has biased composition (low complexity). Residue K462 forms a Glycyl lysine isopeptide (Lys-Gly) (interchain with G-Cter in SUMO2) linkage. A phosphoserine mark is found at S479 and S496. Residues 479–497 (SPCPSPGPGHALPPKPPSP) show a composition bias toward pro residues. Residues 523-539 (PEDKNHRKSRAAEEKEP) are compositionally biased toward basic and acidic residues. The segment covering 542–556 (PASPAPSPVPSPTPA) has biased composition (pro residues). Residues S544, S548, and S552 each carry the phosphoserine modification. T554 bears the Phosphothreonine mark. The segment covering 568–579 (PAETAVPAVPAA) has biased composition (low complexity). Residues 599 to 740 (TTDREEATRL…AETKKQDAKE (142 aa)) are a coiled coil. Over residues 600 to 740 (TDREEATRLL…AETKKQDAKE (141 aa)) the composition is skewed to basic and acidic residues. At T818 the chain carries Phosphothreonine.

The protein belongs to the MAP7 family.

It localises to the cytoplasm. It is found in the cytoskeleton. The protein localises to the spindle. Its subcellular location is the microtubule organizing center. The protein resides in the centrosome. It localises to the midbody. Functionally, microtubule-stabilizing protein involved in the control of cell motility and neurite outgrowth. Facilitate microtubule stabilization through the maintenance of acetylated stable microtubules. The sequence is that of MAP7 domain-containing protein 1 (Map7d1) from Mus musculus (Mouse).